We begin with the raw amino-acid sequence, 113 residues long: UPF0122 protein LSEI_1603 (113 aa).

The protein belongs to the UPF0122 family.

Functionally, might take part in the signal recognition particle (SRP) pathway. This is inferred from the conservation of its genetic proximity to ftsY/ffh. May be a regulatory protein. This is UPF0122 protein LSEI_1603 from Lacticaseibacillus paracasei (strain ATCC 334 / BCRC 17002 / CCUG 31169 / CIP 107868 / KCTC 3260 / NRRL B-441) (Lactobacillus paracasei).